Here is a 2515-residue protein sequence, read N- to C-terminus: Probable maltase-glucoamylase 2 (2515 aa).

Residues 1-9 (MARKLSVLE) lie on the Cytoplasmic side of the membrane. The helical transmembrane segment at 10–30 (VLLIIFCLIVVTIDILLLLLV) threads the bilayer. At 31–482 (LEETSDTSFT…DGVWIEMNEV (452 aa)) the chain is on the lumenal side. One can recognise a P-type 1 domain in the interval 41-88 (PECPEIPQSERIDCTPDQEVTEDICRWQYKCCWSPVADANVPRCFFPW). Cystine bridges form between C43–C72, C54–C71, and C65–C84. Residues 152–865 (SHENINLVDG…MDKQPANFIV (714 aa)) are maltase. N-linked (GlcNAc...) asparagine glycosylation occurs at N167. Position 371 is a sulfotyrosine (Y371). The N-linked (GlcNAc...) asparagine glycan is linked to N421. Catalysis depends on E478, which acts as the Nucleophile. E481 is an active-site residue. 3 disulfide bridges follow: C608-C619, C916-C933, and C928-C946. N-linked (GlcNAc...) asparagine glycosylation is present at N613. The P-type 2 domain maps to 904–950 (WNLPVSDLEKFNCYPDDPTASEESCRQRGCLWEDTSTPGVPTCYYDT). The glucoamylase stretch occupies residues 1023–1766 (PLNTPPQPVG…GVNTYVTQVS (744 aa)). Y1238 carries the sulfotyrosine modification. D1375 functions as the Nucleophile in the catalytic mechanism. Residue E1378 is part of the active site. Disordered stretches follow at residues 1816 to 1901 (TPTK…PITT), 1994 to 2015 (STTV…STNA), and 2037 to 2091 (TVPD…SSTT). Over residues 1817–1831 (PTKTSTIPMSSHPSP) the composition is skewed to polar residues. Residues 1832–1901 (STTNATSSET…STNATVPITT (70 aa)) show a composition bias toward low complexity. N-linked (GlcNAc...) asparagine glycosylation occurs at N2249.

This sequence belongs to the glycosyl hydrolase 31 family.

It localises to the membrane. The enzyme catalyses Hydrolysis of terminal (1-&gt;4)-linked alpha-D-glucose residues successively from non-reducing ends of the chains with release of beta-D-glucose.. This is Probable maltase-glucoamylase 2 from Homo sapiens (Human).